Reading from the N-terminus, the 151-residue chain is Large ribosomal subunit protein bL9 (151 aa).

Belongs to the bacterial ribosomal protein bL9 family.

Functionally, binds to the 23S rRNA. This is Large ribosomal subunit protein bL9 from Lactobacillus helveticus (strain DPC 4571).